A 153-amino-acid polypeptide reads, in one-letter code: 3-hydroxyacyl-[acyl-carrier-protein] dehydratase FabZ (153 aa).

Residue His54 is part of the active site.

Belongs to the thioester dehydratase family. FabZ subfamily.

It is found in the cytoplasm. The enzyme catalyses a (3R)-hydroxyacyl-[ACP] = a (2E)-enoyl-[ACP] + H2O. In terms of biological role, involved in unsaturated fatty acids biosynthesis. Catalyzes the dehydration of short chain beta-hydroxyacyl-ACPs and long chain saturated and unsaturated beta-hydroxyacyl-ACPs. The sequence is that of 3-hydroxyacyl-[acyl-carrier-protein] dehydratase FabZ from Chlamydia muridarum (strain MoPn / Nigg).